The primary structure comprises 403 residues: Putative glutamate--cysteine ligase 2 (403 aa).

Positions 370–403 (ESAAQRRAPQAARRRIRASSEPLGPMSMWPERLH) are disordered.

This sequence belongs to the glutamate--cysteine ligase type 2 family. YbdK subfamily.

It carries out the reaction L-cysteine + L-glutamate + ATP = gamma-L-glutamyl-L-cysteine + ADP + phosphate + H(+). In terms of biological role, ATP-dependent carboxylate-amine ligase which exhibits weak glutamate--cysteine ligase activity. The chain is Putative glutamate--cysteine ligase 2 from Bordetella avium (strain 197N).